We begin with the raw amino-acid sequence, 114 residues long: Beta-microseminoprotein (114 aa).

Residues 1–20 (MNVLLGGFVIFATFVTLCNA) form the signal peptide. Cystine bridges form between cysteine 22–cysteine 70, cysteine 38–cysteine 62, cysteine 57–cysteine 93, cysteine 60–cysteine 69, and cysteine 84–cysteine 107.

This sequence belongs to the beta-microseminoprotein family. In terms of assembly, homodimer; Interacts with PI16.

The protein localises to the secreted. The polypeptide is Beta-microseminoprotein (MSMB) (Macaca mulatta (Rhesus macaque)).